The sequence spans 73 residues: NADH dehydrogenase [ubiquinone] 1 beta subcomplex subunit 3-B (73 aa).

The chain crosses the membrane as a helical span at residues 31–48; it reads ALPGLGIGVAAFCVYLVG.

Belongs to the complex I NDUFB3 subunit family. In terms of assembly, complex I is composed of at least 49 different subunits.

It localises to the mitochondrion inner membrane. Its function is as follows. Accessory subunit of the mitochondrial membrane respiratory chain NADH dehydrogenase (Complex I), that is believed not to be involved in catalysis. Complex I functions in the transfer of electrons from NADH to the respiratory chain. The immediate electron acceptor for the enzyme is believed to be ubiquinone. The polypeptide is NADH dehydrogenase [ubiquinone] 1 beta subcomplex subunit 3-B (Arabidopsis thaliana (Mouse-ear cress)).